A 921-amino-acid polypeptide reads, in one-letter code: MEYKNTLLMPKTEFPMRGNLPKREPAMQEKWAEMNIYEKVQEHTKGRPLFVLHDGPPYANGDIHMGHALNKVLKDFIVRYKSMTGFCAPYVPGWDTHGLPIEQALTNKGVKRKEMTVAEFRKLCAEYAYEQVERQREQFKRLGVRADWDNPYITLEPAYEAQQIKVFGDMAKKGYIYKGQKPVYWSPTSESALAEAEIEYQDKKSASIYVAFPVKDGKNVLEGDEKYIIWTTTPWTLPANLGISVHPELEYAIVKVNDEKYIIASELFETVAKTLEWENAEVVKTVKGSELEYTVAKHPFYDRDSLVMLGDHVTTDAGTGCVHTAPGHGEDDFIVGKKYGLEVLCPVDDKGVLTEEAPGFEGLFYDKANKPITEKLEEVGALLKLTFITHSYPHDWRTKKPIIFRATAQWFASIEAFRKELLEAVAETKWVPAWGETRLHNMVRDRGDWCISRQRAWGVPIPVFYAENGDPIITDETINHVADLFREHGSNVWFEREAKDLLPEGFTHPGSPNGEFRKETDIMDVWFDSGSSHQAVLEERDDLQRPADLYLEGSDQYRGWFNSSLSTAVAVTGKAPYKGVLSHGFVLDGEGRKMSKSIGNIVVPKKIMDQLGGDILRLWVSSVDYQSDVRISDDILKQVAEVYRKIRNTFRFLLGNLDDFKPSENTVAVAELREVDRYMLVKLNDLITKVKEAYETYDFAAVYHAIHNFCTIDLSSFYLDFAKDILYIEGANHEDRRAIQTVLYDVLVALTKLVTPILPHTADEVWPYIPGVTEESVQLTDMPEAVQLDGAEALKTKWDAFMTLRDDVLKALEVARNEKVIGKSLNASITLYPTAEMKAMLESINEDLKQLFIVSEYKLGGMMEEAPADAPKYEHTAVVVAQATGETCERCWVVSETIGKDAEHETLCERCATVVKENYVK.

The 'HIGH' region signature appears at 57–67 (PYANGDIHMGH). An L-isoleucyl-5'-AMP-binding site is contributed by Glu552. The short motif at 593–597 (KMSKS) is the 'KMSKS' region element. ATP is bound at residue Lys596. Zn(2+)-binding residues include Cys888, Cys891, Cys908, and Cys911.

This sequence belongs to the class-I aminoacyl-tRNA synthetase family. IleS type 1 subfamily. Monomer. Zn(2+) serves as cofactor.

The protein resides in the cytoplasm. It catalyses the reaction tRNA(Ile) + L-isoleucine + ATP = L-isoleucyl-tRNA(Ile) + AMP + diphosphate. In terms of biological role, catalyzes the attachment of isoleucine to tRNA(Ile). As IleRS can inadvertently accommodate and process structurally similar amino acids such as valine, to avoid such errors it has two additional distinct tRNA(Ile)-dependent editing activities. One activity is designated as 'pretransfer' editing and involves the hydrolysis of activated Val-AMP. The other activity is designated 'posttransfer' editing and involves deacylation of mischarged Val-tRNA(Ile). In Bacillus cereus (strain ATCC 10987 / NRS 248), this protein is Isoleucine--tRNA ligase 1.